Here is a 451-residue protein sequence, read N- to C-terminus: Probable M18 family aminopeptidase 1 (451 aa).

3 residues coordinate Zn(2+): His93, His168, and His426.

This sequence belongs to the peptidase M18 family. Requires Zn(2+) as cofactor.

This chain is Probable M18 family aminopeptidase 1 (apeA), found in Thermotoga maritima (strain ATCC 43589 / DSM 3109 / JCM 10099 / NBRC 100826 / MSB8).